A 198-amino-acid polypeptide reads, in one-letter code: Large ribosomal subunit protein bL25 (198 aa).

The protein belongs to the bacterial ribosomal protein bL25 family. CTC subfamily. In terms of assembly, part of the 50S ribosomal subunit; part of the 5S rRNA/L5/L18/L25 subcomplex. Contacts the 5S rRNA. Binds to the 5S rRNA independently of L5 and L18.

Functionally, this is one of the proteins that binds to the 5S RNA in the ribosome where it forms part of the central protuberance. In Bordetella avium (strain 197N), this protein is Large ribosomal subunit protein bL25.